Consider the following 137-residue polypeptide: Acidic phospholipase A2 CC-PLA2-1 (137 aa).

The signal sequence occupies residues 1 to 16; that stretch reads MRTLWIVAVWLMGVEG. 7 cysteine pairs are disulfide-bonded: C42/C130, C44/C60, C59/C110, C65/C137, C66/C103, C73/C96, and C90/C101. Y43, G45, and G47 together coordinate Ca(2+). H63 is a catalytic residue. D64 contacts Ca(2+). D104 is an active-site residue.

Belongs to the phospholipase A2 family. Group II subfamily. D49 sub-subfamily. Requires Ca(2+) as cofactor. In terms of processing, glycosylated (2.5%). In terms of tissue distribution, expressed by the venom gland.

It is found in the secreted. The enzyme catalyses a 1,2-diacyl-sn-glycero-3-phosphocholine + H2O = a 1-acyl-sn-glycero-3-phosphocholine + a fatty acid + H(+). Functionally, snake venom phospholipase A2 (PLA2) that inhibits blood coagulation and platelet aggregation induced by ADP and arachidonic acid. Inhibits tumor cell adhesion and migration in a dose-dependent manner. Abolishes the attachment of human brain microvascular endothelial cells (HBMEC) to fibrinogen (IC(50)=0.12 uM) and dramatically reduces its adhesion to fibronectin (IC(50)=0.12 uM), whereas no effect is observed on type I collagen, vitronectin or laminin 1. Also blocks the cell migration toward fibronectin and fibrinogen. These effects are not dependent of the catalytic activity, but are mediated by alpha-5/beta-1 (ITGA5/ITGB1) and alpha-v-containing (ITGAV) integrins. Also shows anti-angiogenic activity in chicken chorioallantoix membrane assay. Has a relatively high enzymatic activity. PLA2 catalyzes the calcium-dependent hydrolysis of the 2-acyl groups in 3-sn-phosphoglycerides. This Cerastes cerastes (Horned desert viper) protein is Acidic phospholipase A2 CC-PLA2-1.